A 343-amino-acid polypeptide reads, in one-letter code: MTIDDRKIKILQAIINDYIHTGDPVGSRTIAKKYNLGVGSATIRNEMADLEDMGYLEQPHASSGRVPSNKGYRLYVDSLMENQLLTPEENLKIKQYIIDTAMLEVDKIVRQTSSLLSELTNLTCVIQTPSVNKSFIKSLQLMKVDSTTLVSVIITDAGVMKNHIIRVNSTPTIEELNKINAVINRRLVNLCIEQINLQVINQLKEDLQGYDELFNALLTPLYETLKNAADSPDLIMEGATNIFNYPEYNDIEKAKEMLSLLNDKESLRDLLKTNKDITIRIGEENYKPQAKDCSIIAAEYSFGDRPIGTIGLIGPKRIDYSKVISIMAEIVKELNNILNNQSK.

Belongs to the HrcA family.

Functionally, negative regulator of class I heat shock genes (grpE-dnaK-dnaJ and groELS operons). Prevents heat-shock induction of these operons. The polypeptide is Heat-inducible transcription repressor HrcA (Clostridium botulinum (strain Alaska E43 / Type E3)).